The sequence spans 367 residues: Heme A synthase (367 aa).

5 helical membrane passes run 25–45 (ALRF…LVGG), 111–131 (LIAR…WLTG), 139–159 (WPLV…WWMV), 174–194 (LATH…IMRG), and 210–230 (GFAA…ALVA). Histidine 274 provides a ligand contact to heme. 3 consecutive transmembrane segments (helical) span residues 276 to 296 (IGAY…LRAA), 305 to 325 (AILL…TLLM), and 327 to 347 (VPLH…GFAV). Residue histidine 335 coordinates heme.

The protein belongs to the COX15/CtaA family. Type 2 subfamily. In terms of assembly, interacts with CtaB. It depends on heme b as a cofactor.

It is found in the cell membrane. The catalysed reaction is Fe(II)-heme o + 2 A + H2O = Fe(II)-heme a + 2 AH2. It participates in porphyrin-containing compound metabolism; heme A biosynthesis; heme A from heme O: step 1/1. Catalyzes the conversion of heme O to heme A by two successive hydroxylations of the methyl group at C8. The first hydroxylation forms heme I, the second hydroxylation results in an unstable dihydroxymethyl group, which spontaneously dehydrates, resulting in the formyl group of heme A. The chain is Heme A synthase from Rhizobium johnstonii (strain DSM 114642 / LMG 32736 / 3841) (Rhizobium leguminosarum bv. viciae).